The sequence spans 297 residues: MHLVIVSGLSGSGKTTALHVLEDVGFNCIDNLPVSLLPALVAQIEIHKDQAQKFAIGIDVRNAWQDLSLFPKMVSTLKEAHLPFHTIYLDSHPSVLIQRFSETRRKHPLSDKSTSLEEAIALEQNLLEPIRDAADQTIDTSHLNLHELRDLVKDRVVGRTEATMAILFESFGFKHGTPVNADLVFDARCLPNPHWKPHLRPQTGLDADVVEFLEEQVTVQEMYADIEHYLTRWLPRYQANNRSYITIAIGCTGGQHRSVYLSERLKKHFDQYYQDVQVRHRDIHKHQKHHNHAPANS.

8 to 15 is an ATP binding site; sequence GLSGSGKT. 59–62 contacts GTP; the sequence is DVRN.

This sequence belongs to the RapZ-like family.

Displays ATPase and GTPase activities. The chain is Nucleotide-binding protein CJA_2809 from Cellvibrio japonicus (strain Ueda107) (Pseudomonas fluorescens subsp. cellulosa).